The primary structure comprises 1058 residues: Carbamoyl phosphate synthase large chain (1058 aa).

The carboxyphosphate synthetic domain stretch occupies residues 1-401 (MPKRKDIQKI…SLLKACRSLE (401 aa)). 12 residues coordinate ATP: Arg129, Arg169, Gly175, Gly176, Arg208, Ile210, Glu215, Gly241, Ile242, His243, Gln284, and Glu298. One can recognise an ATP-grasp 1 domain in the interval 133-327 (KQLMQELDQP…IAKLAAKIAV (195 aa)). Positions 284, 298, and 300 each coordinate Mg(2+). Gln284, Glu298, and Asn300 together coordinate Mn(2+). The oligomerization domain stretch occupies residues 402-546 (IGVCHNEMTS…YSTYELENES (145 aa)). The interval 547–929 (VQSNKESILV…ALYKAFEANN (383 aa)) is carbamoyl phosphate synthetic domain. Positions 671-861 (EKALKELGIP…MAQIATKLIL (191 aa)) constitute an ATP-grasp 2 domain. Positions 707, 746, 748, 752, 777, 778, 779, 780, 820, and 832 each coordinate ATP. Mg(2+) is bound by residues Gln820, Glu832, and Asn834. 3 residues coordinate Mn(2+): Gln820, Glu832, and Asn834. The 129-residue stretch at 930–1058 (SHLSEFGQIV…ESRCFNIEAI (129 aa)) folds into the MGS-like domain. Residues 930–1058 (SHLSEFGQIV…ESRCFNIEAI (129 aa)) are allosteric domain.

This sequence belongs to the CarB family. Composed of two chains; the small (or glutamine) chain promotes the hydrolysis of glutamine to ammonia, which is used by the large (or ammonia) chain to synthesize carbamoyl phosphate. Tetramer of heterodimers (alpha,beta)4. Mg(2+) is required as a cofactor. Requires Mn(2+) as cofactor.

It carries out the reaction hydrogencarbonate + L-glutamine + 2 ATP + H2O = carbamoyl phosphate + L-glutamate + 2 ADP + phosphate + 2 H(+). It catalyses the reaction hydrogencarbonate + NH4(+) + 2 ATP = carbamoyl phosphate + 2 ADP + phosphate + 2 H(+). Its pathway is amino-acid biosynthesis; L-arginine biosynthesis; carbamoyl phosphate from bicarbonate: step 1/1. It functions in the pathway pyrimidine metabolism; UMP biosynthesis via de novo pathway; (S)-dihydroorotate from bicarbonate: step 1/3. Large subunit of the glutamine-dependent carbamoyl phosphate synthetase (CPSase). CPSase catalyzes the formation of carbamoyl phosphate from the ammonia moiety of glutamine, carbonate, and phosphate donated by ATP, constituting the first step of 2 biosynthetic pathways, one leading to arginine and/or urea and the other to pyrimidine nucleotides. The large subunit (synthetase) binds the substrates ammonia (free or transferred from glutamine from the small subunit), hydrogencarbonate and ATP and carries out an ATP-coupled ligase reaction, activating hydrogencarbonate by forming carboxy phosphate which reacts with ammonia to form carbamoyl phosphate. The chain is Carbamoyl phosphate synthase large chain from Streptococcus pyogenes serotype M3 (strain ATCC BAA-595 / MGAS315).